Here is a 235-residue protein sequence, read N- to C-terminus: Small ribosomal subunit protein uS3 (235 aa).

The region spanning 39–107 is the KH type-2 domain; sequence VRKFLNKELA…PAQINIAEVK (69 aa). A disordered region spans residues 215–235; sequence AQPEQQPADKPKKAPRGKGRK.

It belongs to the universal ribosomal protein uS3 family. As to quaternary structure, part of the 30S ribosomal subunit. Forms a tight complex with proteins S10 and S14.

In terms of biological role, binds the lower part of the 30S subunit head. Binds mRNA in the 70S ribosome, positioning it for translation. This chain is Small ribosomal subunit protein uS3, found in Pasteurella multocida (strain Pm70).